The primary structure comprises 1299 residues: DNA-directed RNA polymerase subunit beta' (1299 aa).

Residues C60, C62, C75, and C78 each coordinate Zn(2+). The disordered stretch occupies residues 385–405; it reads GRRGRPVTGPGNRPLKSLSDM. D535, D537, and D539 together coordinate Mg(2+). Positions 886, 962, 969, and 972 each coordinate Zn(2+).

Belongs to the RNA polymerase beta' chain family. The RNAP catalytic core consists of 2 alpha, 1 beta, 1 beta' and 1 omega subunit. When a sigma factor is associated with the core the holoenzyme is formed, which can initiate transcription. The cofactor is Mg(2+). Zn(2+) is required as a cofactor.

The catalysed reaction is RNA(n) + a ribonucleoside 5'-triphosphate = RNA(n+1) + diphosphate. DNA-dependent RNA polymerase catalyzes the transcription of DNA into RNA using the four ribonucleoside triphosphates as substrates. This Streptomyces avermitilis (strain ATCC 31267 / DSM 46492 / JCM 5070 / NBRC 14893 / NCIMB 12804 / NRRL 8165 / MA-4680) protein is DNA-directed RNA polymerase subunit beta'.